The chain runs to 37 residues: Cytochrome b6-f complex subunit 5 (37 aa).

Residues 5–25 form a helical membrane-spanning segment; the sequence is LLSGIVLGLISITSAGLFVTA.

The protein belongs to the PetG family. The 4 large subunits of the cytochrome b6-f complex are cytochrome b6, subunit IV (17 kDa polypeptide, PetD), cytochrome f and the Rieske protein, while the 4 small subunits are PetG, PetL, PetM and PetN. The complex functions as a dimer.

The protein localises to the plastid. The protein resides in the chloroplast thylakoid membrane. Functionally, component of the cytochrome b6-f complex, which mediates electron transfer between photosystem II (PSII) and photosystem I (PSI), cyclic electron flow around PSI, and state transitions. PetG is required for either the stability or assembly of the cytochrome b6-f complex. This is Cytochrome b6-f complex subunit 5 from Psilotum nudum (Whisk fern).